The sequence spans 756 residues: ATP-dependent zinc metalloprotease FtsH (756 aa).

Residues 1–44 (MGVPAGMPHPNGLQPQRKDKALAQNPNTPQKGSEAFLKKLIHSS) lie on the Cytoplasmic side of the membrane. The helical transmembrane segment at 45 to 65 (WFFPGAAIVVMLGFLMASFFT) threads the bilayer. The Extracellular segment spans residues 66–148 (QPSRQVDTNV…SYTDQPVEHS (83 aa)). A helical transmembrane segment spans residues 149–169 (FLGSLVSLLLPILLFGVLFWF). At 170-756 (LMGRVGGGSS…NQNGAENERG (587 aa)) the chain is on the cytoplasmic side. 241–248 (GPPGTGKT) serves as a coordination point for ATP. His-463 provides a ligand contact to Zn(2+). Residue Glu-464 is part of the active site. Zn(2+) contacts are provided by His-467 and Asp-539. Composition is skewed to basic and acidic residues over residues 647–662 (PERE…ERTD) and 672–681 (LAKEAEKSEE). The segment at 647 to 756 (PEREHWYSKP…NQNGAENERG (110 aa)) is disordered. 2 stretches are compositionally biased toward low complexity: residues 684-703 (AEAP…VPVA) and 713-724 (PLTDPDADPTVA). Polar residues predominate over residues 744–756 (GTPNQNGAENERG).

In the central section; belongs to the AAA ATPase family. It in the C-terminal section; belongs to the peptidase M41 family. As to quaternary structure, homohexamer. The cofactor is Zn(2+).

Its subcellular location is the cell membrane. In terms of biological role, acts as a processive, ATP-dependent zinc metallopeptidase for both cytoplasmic and membrane proteins. Plays a role in the quality control of integral membrane proteins. The polypeptide is ATP-dependent zinc metalloprotease FtsH (Rothia mucilaginosa (strain DY-18) (Stomatococcus mucilaginosus)).